Consider the following 1733-residue polypeptide: DNA-directed RNA polymerase II subunit RPB1 (1733 aa).

Zn(2+) is bound by residues Cys-67, Cys-70, Cys-77, His-80, Cys-107, Cys-110, Cys-148, and Cys-167. The lid loop stretch occupies residues 248 to 260; sequence PSISFNESQRGED. Positions 306-323 are rudder loop; sequence NDIAGQPQALQKSGRPVK. Mg(2+)-binding residues include Asp-481, Asp-483, and Asp-485. A Glycyl lysine isopeptide (Lys-Gly) (interchain with G-Cter in ubiquitin) cross-link involves residue Lys-695. The tract at residues 810–822 is bridging helix; sequence PQEFFFHAMGGRE. Glycyl lysine isopeptide (Lys-Gly) (interchain with G-Cter in ubiquitin) cross-links involve residues Lys-1246 and Lys-1350. At Thr-1471 the chain carries Phosphothreonine. The tract at residues 1537–1733 is disordered; sequence VSSPGFSPTS…QKHNENENSR (197 aa). A compositionally biased stretch (low complexity) spans 1538-1719; that stretch reads SSPGFSPTSP…YSPGSPAYSP (182 aa). 23 repeat units span residues 1549–1555, 1556–1562, 1563–1569, 1570–1576, 1577–1583, 1584–1590, 1591–1597, 1598–1604, 1605–1611, 1612–1618, 1619–1625, 1626–1632, 1633–1639, 1640–1646, 1647–1653, 1654–1660, 1661–1667, 1668–1674, 1675–1681, 1682–1688, 1689–1695, 1696–1702, and 1703–1709. A C-terminal domain (CTD); 24 X 7 AA approximate tandem repeats of Y-S-P-T-S-P-[A-S-N-G] region spans residues 1549–1716; it reads YSPTSPAYSP…SPGYSPGSPA (168 aa). The 24; approximate repeat unit spans residues 1710–1716; it reads YSPGSPA. The segment covering 1720–1733 has biased composition (basic and acidic residues); it reads KQDEQKHNENENSR.

It belongs to the RNA polymerase beta' chain family. As to quaternary structure, component of the RNA polymerase II (Pol II) complex consisting of 12 subunits. Interacts with DEF1; the interaction is direct and serves to bridge RPB1 to the Elongin complex in a DNA-damaged dependent manner. Interacts with the Elongin subunit ELA1. Interacts with the Elongin subunit ELC1. Interacts with ASK10. Interacts with ESS1. Interacts with RTT103. Interacts with SHE2. Post-translationally, the tandem 7 residues repeats in the C-terminal domain (CTD) can be highly phosphorylated. The phosphorylation activates Pol II. Phosphorylation occurs mainly at residues 'Ser-2' and 'Ser-5' of the heptapeptide repeat. The phosphorylated form of Pol II appears to carry, on average, one phosphate per repeat. The phosphorylation state is believed to result from the balanced action of site-specific CTD kinases and phosphatases, and a 'CTD code' that specifies the position of Pol II within the transcription cycle has been proposed. Phosphorylation at 'Ser-5' occurs in promoter-proximal regions in early elongation. Phosphorylation at 'Ser-2' predominates in regions more distal to the promoter and triggers binding of the 3' RNA processing machinery. CTD kinases include KIN28 (as part of the TFKII complex, a subcomplex of the TFIIH holo complex), SSN3/SRB10 (as part of the SRB8-11 complex, a module of the Mediator complex), CTK1 (as part of CTD kinase), and probably BUR1 (as part of the BUR1-BUR2 kinase complex). Phosphatases include FCP1 and SSU72. Following transcription stress, the elongating form of RNA polymerase II (RNA pol IIo) is polyubiquitinated via 'Lys-63'-linkages on Lys-1246 by the RSP5-UBA1-UBC5 complex at DNA damage sites without leading to degradation: ubiquitination promotes RNA pol IIo backtracking to allow access by the transcription-coupled nucleotide excision repair (TC-NER) machinery. Subsequent DEF1-dependent polyubiquitination by the elongin complex via 'Lys-48'-linkages may lead to proteasome-mediated degradation; presumably at stalled RNA pol II where TC-NER has failed, to halt global transcription and enable 'last resort' DNA repair pathways.

The protein resides in the nucleus. It catalyses the reaction RNA(n) + a ribonucleoside 5'-triphosphate = RNA(n+1) + diphosphate. In terms of biological role, DNA-dependent RNA polymerase catalyzes the transcription of DNA into RNA using the four ribonucleoside triphosphates as substrates. Largest and catalytic component of RNA polymerase II which synthesizes mRNA precursors and many functional non-coding RNAs. Forms the polymerase active center together with the second largest subunit. Pol II is the central component of the basal RNA polymerase II transcription machinery. During a transcription cycle, Pol II, general transcription factors and the Mediator complex assemble as the preinitiation complex (PIC) at the promoter. 11-15 base pairs of DNA surrounding the transcription start site are melted and the single-stranded DNA template strand of the promoter is positioned deeply within the central active site cleft of Pol II to form the open complex. After synthesis of about 30 bases of RNA, Pol II releases its contacts with the core promoter and the rest of the transcription machinery (promoter clearance) and enters the stage of transcription elongation in which it moves on the template as the transcript elongates. Pol II appears to oscillate between inactive and active conformations at each step of nucleotide addition. Elongation is influenced by the phosphorylation status of the C-terminal domain (CTD) of Pol II largest subunit (RPB1), which serves as a platform for assembly of factors that regulate transcription initiation, elongation, termination and mRNA processing. Pol II is composed of mobile elements that move relative to each other. The core element with the central large cleft comprises RPB3, RBP10, RPB11, RPB12 and regions of RPB1 and RPB2 forming the active center. The clamp element (portions of RPB1, RPB2 and RPB3) is connected to the core through a set of flexible switches and moves to open and close the cleft. A bridging helix emanates from RPB1 and crosses the cleft near the catalytic site and is thought to promote translocation of Pol II by acting as a ratchet that moves the RNA-DNA hybrid through the active site by switching from straight to bent conformations at each step of nucleotide addition. In elongating Pol II, the lid loop (RPB1) appears to act as a wedge to drive apart the DNA and RNA strands at the upstream end of the transcription bubble and guide the RNA strand toward the RNA exit groove located near the base of the largely unstructured CTD domain of RPB1. The rudder loop (RPB1) interacts with single-stranded DNA after separation from the RNA strand, likely preventing reassociation with the exiting RNA. The cleft is surrounded by jaws: an upper jaw formed by portions of RBP1, RPB2 and RPB9, and a lower jaw, formed by RPB5 and portions of RBP1. The jaws are thought to grab the incoming DNA template, mainly by RPB5 direct contacts to DNA. The polypeptide is DNA-directed RNA polymerase II subunit RPB1 (RPO21) (Saccharomyces cerevisiae (strain ATCC 204508 / S288c) (Baker's yeast)).